The chain runs to 322 residues: Transaldolase (322 aa).

The active-site Schiff-base intermediate with substrate is K132.

Belongs to the transaldolase family. Type 1 subfamily. In terms of assembly, homodimer.

Its subcellular location is the cytoplasm. It catalyses the reaction D-sedoheptulose 7-phosphate + D-glyceraldehyde 3-phosphate = D-erythrose 4-phosphate + beta-D-fructose 6-phosphate. The protein operates within carbohydrate degradation; pentose phosphate pathway; D-glyceraldehyde 3-phosphate and beta-D-fructose 6-phosphate from D-ribose 5-phosphate and D-xylulose 5-phosphate (non-oxidative stage): step 2/3. Its function is as follows. Transaldolase is important for the balance of metabolites in the pentose-phosphate pathway. This chain is Transaldolase, found in Protochlamydia amoebophila (strain UWE25).